The following is a 226-amino-acid chain: Large ribosomal subunit protein uL3 (226 aa).

Residues 136–162 (NFGSQRASHGNSRSHNVPGSISMAQDP) form a disordered region. Residues 137–158 (FGSQRASHGNSRSHNVPGSISM) show a composition bias toward polar residues. Residue glutamine 160 is modified to N5-methylglutamine.

Belongs to the universal ribosomal protein uL3 family. In terms of assembly, part of the 50S ribosomal subunit. Forms a cluster with proteins L14 and L19. In terms of processing, methylated by PrmB.

Its function is as follows. One of the primary rRNA binding proteins, it binds directly near the 3'-end of the 23S rRNA, where it nucleates assembly of the 50S subunit. The protein is Large ribosomal subunit protein uL3 of Methylibium petroleiphilum (strain ATCC BAA-1232 / LMG 22953 / PM1).